A 175-amino-acid chain; its full sequence is uncharacterized protein (175 aa).

This is an uncharacterized protein from Enterobacteria phage T4 (Bacteriophage T4).